Consider the following 427-residue polypeptide: Trigger factor (427 aa).

The region spanning glycine 163–proline 248 is the PPIase FKBP-type domain.

The protein belongs to the FKBP-type PPIase family. Tig subfamily.

The protein localises to the cytoplasm. It carries out the reaction [protein]-peptidylproline (omega=180) = [protein]-peptidylproline (omega=0). In terms of biological role, involved in protein export. Acts as a chaperone by maintaining the newly synthesized protein in an open conformation. Functions as a peptidyl-prolyl cis-trans isomerase. This is Trigger factor from Streptococcus agalactiae serotype III (strain NEM316).